We begin with the raw amino-acid sequence, 92 residues long: Alpha-conotoxin FrXXA 2 (92 aa).

The first 24 residues, 1–24 (MPKLEMMLLVLLILPLPYFDAAGG), serve as a signal peptide directing secretion. A propeptide spanning residues 25 to 45 (QAVQGDGHGDGMDRYLQRDDR) is cleaved from the precursor. 4 disulfide bridges follow: C63/C72, C68/C80, C73/C90, and C78/C92.

Belongs to the conotoxin D superfamily. In terms of assembly, homodimer; disulfide-linked. The homodimer contains 10 disulfide bonds. Expressed by the venom duct.

The protein localises to the secreted. Functionally, alpha-conotoxins act on postsynaptic membranes, they bind to the nicotinic acetylcholine receptors (nAChR) and thus inhibit them. Through its two C-terminal domains, this homodimeric protein would bind to two nAChR allosteric sites, located outside the nAChR C-loop of the principal binding face and at the adjacent binding interface in a clockwise direction. Component 4b which seems to correspond to this toxin blocks both neuronal and muscular subtypes: human alpha-7/CHRNA7 (IC(50)=125 nM), human alpha-3-beta-2 (CHRNA3-CHRNB2) (IC(50)=282 nM), human alpha-4-beta-2 (CHRNA4-CHRNB2) (IC(50)=697 nM), mouse adult muscular subtype alpha-1-beta-1-delta-epsilon (CHRNA1-CHRNB1-CHRND-CHRNE) (IC(50)=351 nM), and mouse fetal muscular subtype alpha-1-beta-1-gamma-delta (CHRNA1-CHRNB1-CHRNG-CHRND) (IC(50)=447 nM). It shows different dissociation rates towards the different subtypes, with a very slow rate towards alpha-7 subtype (almost irreversible), followed by the adult muscular subtype, the fetal muscular subtype, alpha-3-beta-2 and alpha-4-beta-2 (almost entirely reversible within a few minutes of washing). The protein is Alpha-conotoxin FrXXA 2 of Conus fergusoni (Ferguson's cone).